The chain runs to 944 residues: Isoleucine--tRNA ligase (944 aa).

A 'HIGH' region motif is present at residues 58-68 (PYANGQIHIGH). Position 568 (glutamate 568) interacts with L-isoleucyl-5'-AMP. A 'KMSKS' region motif is present at residues 609–613 (KMSKS). Lysine 612 is an ATP binding site. Zn(2+)-binding residues include cysteine 907, cysteine 910, cysteine 927, and cysteine 930.

The protein belongs to the class-I aminoacyl-tRNA synthetase family. IleS type 1 subfamily. In terms of assembly, monomer. It depends on Zn(2+) as a cofactor.

It localises to the cytoplasm. The catalysed reaction is tRNA(Ile) + L-isoleucine + ATP = L-isoleucyl-tRNA(Ile) + AMP + diphosphate. Functionally, catalyzes the attachment of isoleucine to tRNA(Ile). As IleRS can inadvertently accommodate and process structurally similar amino acids such as valine, to avoid such errors it has two additional distinct tRNA(Ile)-dependent editing activities. One activity is designated as 'pretransfer' editing and involves the hydrolysis of activated Val-AMP. The other activity is designated 'posttransfer' editing and involves deacylation of mischarged Val-tRNA(Ile). The protein is Isoleucine--tRNA ligase of Idiomarina loihiensis (strain ATCC BAA-735 / DSM 15497 / L2-TR).